Here is a 179-residue protein sequence, read N- to C-terminus: Large ribosomal subunit protein uL10 (179 aa).

The protein belongs to the universal ribosomal protein uL10 family. Part of the ribosomal stalk of the 50S ribosomal subunit. The N-terminus interacts with L11 and the large rRNA to form the base of the stalk. The C-terminus forms an elongated spine to which L12 dimers bind in a sequential fashion forming a multimeric L10(L12)X complex.

Functionally, forms part of the ribosomal stalk, playing a central role in the interaction of the ribosome with GTP-bound translation factors. This is Large ribosomal subunit protein uL10 from Polynucleobacter necessarius subsp. necessarius (strain STIR1).